A 339-amino-acid polypeptide reads, in one-letter code: Cathepsin B (339 aa).

A signal peptide spans 1–17 (MWWSLIPLSCLLALTSA). Positions 18–79 (HDKPSSHPLS…ERVGFSEDIN (62 aa)) are cleaved as a propeptide — activation peptide. 6 disulfides stabilise this stretch: Cys93/Cys122, Cys105/Cys150, Cys141/Cys207, Cys142/Cys146, Cys179/Cys211, and Cys187/Cys198. Residue Cys108 is part of the active site. N-linked (GlcNAc...) asparagine glycosylation occurs at Asn192. Residue Lys220 is modified to N6-acetyllysine. Active-site residues include His278 and Asn298. The propeptide occupies 334–339 (QYWGRF).

This sequence belongs to the peptidase C1 family. As to quaternary structure, dimer of a heavy chain and a light chain cross-linked by a disulfide bond. Interacts with SRPX2. Directly interacts with SHKBP1. Expressed in the epithelial cells of the prostate and mammary gland.

The protein resides in the lysosome. Its subcellular location is the melanosome. The protein localises to the secreted. It is found in the extracellular space. It localises to the apical cell membrane. The enzyme catalyses Hydrolysis of proteins with broad specificity for peptide bonds. Preferentially cleaves -Arg-Arg-|-Xaa bonds in small molecule substrates (thus differing from cathepsin L). In addition to being an endopeptidase, shows peptidyl-dipeptidase activity, liberating C-terminal dipeptides.. In terms of biological role, thiol protease which is believed to participate in intracellular degradation and turnover of proteins. Cleaves matrix extracellular phosphoglycoprotein MEPE. Involved in the solubilization of cross-linked TG/thyroglobulin in the thyroid follicle lumen. Has also been implicated in tumor invasion and metastasis. This Rattus norvegicus (Rat) protein is Cathepsin B (Ctsb).